A 212-amino-acid polypeptide reads, in one-letter code: Uridine kinase (212 aa).

ATP is bound at residue 13 to 20 (GASASGKS).

Belongs to the uridine kinase family.

The protein resides in the cytoplasm. The catalysed reaction is uridine + ATP = UMP + ADP + H(+). It carries out the reaction cytidine + ATP = CMP + ADP + H(+). The protein operates within pyrimidine metabolism; CTP biosynthesis via salvage pathway; CTP from cytidine: step 1/3. It participates in pyrimidine metabolism; UMP biosynthesis via salvage pathway; UMP from uridine: step 1/1. The polypeptide is Uridine kinase (Shewanella denitrificans (strain OS217 / ATCC BAA-1090 / DSM 15013)).